The following is a 376-amino-acid chain: C2H2 type master regulator of conidiophore development brlA (376 aa).

Residues 20–29 (TSFSSASSSA) are compositionally biased toward low complexity. 3 disordered regions span residues 20–47 (TSFS…ELSL), 197–229 (HHHH…ASPN), and 241–267 (EAQR…PESG). Residues 34-44 (TPSSRRSTPNE) show a composition bias toward polar residues. Over residues 197-209 (HHHHHNHHQHHHA) the composition is skewed to basic residues. Residues 219-229 (QLHSNTGASPN) show a composition bias toward polar residues. Residues 241–256 (EAQRKTSELQRAQIRE) show a composition bias toward basic and acidic residues. The C2H2-type 1; degenerate zinc finger occupies 277 to 301 (CKCDYPGCNKAFRRNEHLKRHKQTF). The C2H2-type 2 zinc-finger motif lies at 309–332 (FSCEFCGKDQFNRQDNLNNHRKLH). The segment at 351-376 (IIEHEERSRKRRAPPKSKAEKRDYDF) is disordered. Over residues 367–376 (SKAEKRDYDF) the composition is skewed to basic and acidic residues.

The protein resides in the nucleus. In terms of biological role, brlA, abaA and wetA are pivotal regulators of conidiophore development and conidium maturation. They act individually and together to regulate their own expression and that of numerous other sporulation-specific genes. Binds promoters of target genes at brlA response elements (BREs) containing the conserved sequence 5'-(C/A)(A/G)AGGG(G/A)-3'. This chain is C2H2 type master regulator of conidiophore development brlA, found in Hapsidospora chrysogena (Acremonium chrysogenum).